We begin with the raw amino-acid sequence, 104 residues long: Ig kappa chain V region XP-1 (104 aa).

Positions Ala-1–Cys-24 are framework-1. Positions Gln-25–Ala-35 are complementarity-determining-1. Positions Trp-36–Tyr-49 are framework-2. The segment at Thr-50–Ser-56 is complementarity-determining-2. Positions Gly-57 to Cys-88 are framework-3. Residues Glu-89 to Gly-100 form a complementarity-determining-3 region. The tract at residues Phe-101–Gly-104 is framework-4.

The protein is Ig kappa chain V region XP-1 of Oryctolagus cuniculus (Rabbit).